Here is a 149-residue protein sequence, read N- to C-terminus: Down syndrome critical region protein 9 (149 aa).

Residues 1–41 (MGRICPVNSRARRLRARPGRPSGDSLPYHQLQGGAPRLWSP) form a disordered region.

Testis specific.

This is Down syndrome critical region protein 9 (DSCR9) from Homo sapiens (Human).